We begin with the raw amino-acid sequence, 289 residues long: Pyridoxal kinase PdxY (289 aa).

Substrate contacts are provided by residues Ser9 and 44-45 (TQ). Asp112, Ala144, Glu149, and Lys182 together coordinate ATP. Asp225 is a substrate binding site.

The protein belongs to the pyridoxine kinase family. PdxY subfamily. In terms of assembly, homodimer. The cofactor is Mg(2+).

It catalyses the reaction pyridoxal + ATP = pyridoxal 5'-phosphate + ADP + H(+). The protein operates within cofactor metabolism; pyridoxal 5'-phosphate salvage; pyridoxal 5'-phosphate from pyridoxal: step 1/1. Pyridoxal kinase involved in the salvage pathway of pyridoxal 5'-phosphate (PLP). Catalyzes the phosphorylation of pyridoxal to PLP. The chain is Pyridoxal kinase PdxY from Aliivibrio fischeri (strain ATCC 700601 / ES114) (Vibrio fischeri).